The primary structure comprises 677 residues: Methionine--tRNA ligase (677 aa).

Residues Pro15–His25 carry the 'HIGH' region motif. Zn(2+) is bound by residues Cys146, Cys149, Cys159, and Cys162. Positions Lys333 to Ser337 match the 'KMSKS' region motif. An ATP-binding site is contributed by Lys336. Residues Asp575–Lys677 form the tRNA-binding domain.

This sequence belongs to the class-I aminoacyl-tRNA synthetase family. MetG type 1 subfamily. In terms of assembly, homodimer. Requires Zn(2+) as cofactor.

It localises to the cytoplasm. The enzyme catalyses tRNA(Met) + L-methionine + ATP = L-methionyl-tRNA(Met) + AMP + diphosphate. Is required not only for elongation of protein synthesis but also for the initiation of all mRNA translation through initiator tRNA(fMet) aminoacylation. The sequence is that of Methionine--tRNA ligase from Citrobacter koseri (strain ATCC BAA-895 / CDC 4225-83 / SGSC4696).